The following is a 442-amino-acid chain: Probable diguanylate cyclase DgcI (442 aa).

A signal peptide spans 1–23 (MSRINKFVLTVSLLIFIMISAVA). A lipid anchor (N-palmitoyl cysteine) is attached at cysteine 24. Cysteine 24 carries the S-diacylglycerol cysteine lipid modification. The helical transmembrane segment at 231-251 (LIIFFAALVAVISGASCLYLV) threads the bilayer. The region spanning 319–442 (KGGYLCLFDV…KNGRAQISWQ (124 aa)) is the GGDEF domain. Mg(2+) is bound at residue aspartate 327. Asparagine 335, histidine 340, and aspartate 344 together coordinate substrate. Residue aspartate 371 participates in Mg(2+) binding.

In terms of assembly, homodimer. Mg(2+) is required as a cofactor.

It is found in the cell membrane. The enzyme catalyses 2 GTP = 3',3'-c-di-GMP + 2 diphosphate. Its pathway is purine metabolism; 3',5'-cyclic di-GMP biosynthesis. Catalyzes the synthesis of cyclic-di-GMP (c-di-GMP) via the condensation of 2 GTP molecules. The chain is Probable diguanylate cyclase DgcI from Escherichia coli (strain K12).